We begin with the raw amino-acid sequence, 209 residues long: Glycerol-3-phosphate acyltransferase (209 aa).

The next 5 helical transmembrane spans lie at 8 to 28 (NVLFYITAYLVGGIPFGYILA), 78 to 98 (VLVLIAKLLGFPPATWWLIGI), 124 to 144 (VLLVLLPVETIIGIVTWLIVA), 149 to 169 (ISSLSSLSGLVALVVASFIVH), and 170 to 190 (PDMPYVHSHAPLLLLAFIIFY).

The protein belongs to the PlsY family. As to quaternary structure, probably interacts with PlsX.

The protein localises to the cell inner membrane. The catalysed reaction is an acyl phosphate + sn-glycerol 3-phosphate = a 1-acyl-sn-glycero-3-phosphate + phosphate. The protein operates within lipid metabolism; phospholipid metabolism. Its function is as follows. Catalyzes the transfer of an acyl group from acyl-phosphate (acyl-PO(4)) to glycerol-3-phosphate (G3P) to form lysophosphatidic acid (LPA). This enzyme utilizes acyl-phosphate as fatty acyl donor, but not acyl-CoA or acyl-ACP. The sequence is that of Glycerol-3-phosphate acyltransferase from Nitratiruptor sp. (strain SB155-2).